Reading from the N-terminus, the 449-residue chain is Exodeoxyribonuclease 7 large subunit (449 aa).

It belongs to the XseA family. As to quaternary structure, heterooligomer composed of large and small subunits.

Its subcellular location is the cytoplasm. The catalysed reaction is Exonucleolytic cleavage in either 5'- to 3'- or 3'- to 5'-direction to yield nucleoside 5'-phosphates.. Bidirectionally degrades single-stranded DNA into large acid-insoluble oligonucleotides, which are then degraded further into small acid-soluble oligonucleotides. This chain is Exodeoxyribonuclease 7 large subunit, found in Salmonella dublin (strain CT_02021853).